A 272-amino-acid polypeptide reads, in one-letter code: MSRLAGLFVQLRDAGRAALIPFMTAGDPSLTATVPLMHALVAAGADAIELGMPFSDPMADGPSIQRASERALARGVKLRMVLEWVREFRTTNSHTPVILMGYLNPVEAMGITSFAEAAATAGVDGVILVDLTPEEGRGEAVVLRQRGIDPIFLLAPTSGPERVATVRSMGSGFVYYVSLRGITGAAQADWAEVLERVQHLHRQLGLPVAIGFGIRDAATVARVATGADAVVVGSALVDQLAACATDQEAIAAAIRFVEPLAQAVRSTERRGA.

Active-site proton acceptor residues include Glu-49 and Asp-60.

This sequence belongs to the TrpA family. In terms of assembly, tetramer of two alpha and two beta chains.

It carries out the reaction (1S,2R)-1-C-(indol-3-yl)glycerol 3-phosphate + L-serine = D-glyceraldehyde 3-phosphate + L-tryptophan + H2O. It functions in the pathway amino-acid biosynthesis; L-tryptophan biosynthesis; L-tryptophan from chorismate: step 5/5. In terms of biological role, the alpha subunit is responsible for the aldol cleavage of indoleglycerol phosphate to indole and glyceraldehyde 3-phosphate. This chain is Tryptophan synthase alpha chain, found in Acidithiobacillus ferrooxidans (strain ATCC 23270 / DSM 14882 / CIP 104768 / NCIMB 8455) (Ferrobacillus ferrooxidans (strain ATCC 23270)).